The chain runs to 167 residues: Ribosome maturation factor RimM (167 aa).

Residues 92-166 form the PRC barrel domain; sequence DDEFYHTDLI…RIVADPPEGL (75 aa).

The protein belongs to the RimM family. In terms of assembly, binds ribosomal protein uS19.

The protein resides in the cytoplasm. Its function is as follows. An accessory protein needed during the final step in the assembly of 30S ribosomal subunit, possibly for assembly of the head region. Essential for efficient processing of 16S rRNA. May be needed both before and after RbfA during the maturation of 16S rRNA. It has affinity for free ribosomal 30S subunits but not for 70S ribosomes. The sequence is that of Ribosome maturation factor RimM from Ruegeria pomeroyi (strain ATCC 700808 / DSM 15171 / DSS-3) (Silicibacter pomeroyi).